The following is a 236-amino-acid chain: Ribosome maturation protein SDO1 homolog (236 aa).

Belongs to the SDO1/SBDS family.

This is Ribosome maturation protein SDO1 homolog from Pyrococcus horikoshii (strain ATCC 700860 / DSM 12428 / JCM 9974 / NBRC 100139 / OT-3).